Reading from the N-terminus, the 401-residue chain is Tyrosine--tRNA ligase (401 aa).

A 'HIGH' region motif is present at residues 42-51; the sequence is PTAPDLHLGH. The 'KMSKS' region motif lies at 226–230; the sequence is KMSKS. Residue K229 participates in ATP binding. The 62-residue stretch at 336-397 folds into the S4 RNA-binding domain; it reads IALAQLLKQI…GKRRIAKLSI (62 aa).

Belongs to the class-I aminoacyl-tRNA synthetase family. TyrS type 2 subfamily. As to quaternary structure, homodimer.

The protein localises to the cytoplasm. The catalysed reaction is tRNA(Tyr) + L-tyrosine + ATP = L-tyrosyl-tRNA(Tyr) + AMP + diphosphate + H(+). In terms of biological role, catalyzes the attachment of tyrosine to tRNA(Tyr) in a two-step reaction: tyrosine is first activated by ATP to form Tyr-AMP and then transferred to the acceptor end of tRNA(Tyr). The protein is Tyrosine--tRNA ligase of Legionella pneumophila (strain Paris).